Reading from the N-terminus, the 84-residue chain is NADH-ubiquinone oxidoreductase chain 4L (84 aa).

Transmembrane regions (helical) follow at residues 7–29 (ILLLFYISQNNLITLLIAIEILL) and 50–70 (IFSIVIIILAGAESAIGLSIL).

This sequence belongs to the complex I subunit 4L family.

The protein localises to the mitochondrion membrane. It catalyses the reaction a ubiquinone + NADH + 5 H(+)(in) = a ubiquinol + NAD(+) + 4 H(+)(out). Core subunit of the mitochondrial membrane respiratory chain NADH dehydrogenase (Complex I) that is believed to belong to the minimal assembly required for catalysis. Complex I functions in the transfer of electrons from NADH to the respiratory chain. The immediate electron acceptor for the enzyme is believed to be ubiquinone. The polypeptide is NADH-ubiquinone oxidoreductase chain 4L (ND4L) (Candida parapsilosis (Yeast)).